A 451-amino-acid polypeptide reads, in one-letter code: tRNA modification GTPase MnmE (451 aa).

(6S)-5-formyl-5,6,7,8-tetrahydrofolate is bound by residues R25, E87, and R127. One can recognise a TrmE-type G domain in the interval 222–374 (GLRVALVGRP…FVQVLLERCG (153 aa)). N232 contributes to the K(+) binding site. Residues 232-237 (NVGKSS), 251-257 (TELPGTT), and 276-279 (DTAG) each bind GTP. S236 contacts Mg(2+). 3 residues coordinate K(+): T251, L253, and T256. T257 provides a ligand contact to Mg(2+). K451 contributes to the (6S)-5-formyl-5,6,7,8-tetrahydrofolate binding site.

This sequence belongs to the TRAFAC class TrmE-Era-EngA-EngB-Septin-like GTPase superfamily. TrmE GTPase family. As to quaternary structure, homodimer. Heterotetramer of two MnmE and two MnmG subunits. It depends on K(+) as a cofactor.

It localises to the cytoplasm. In terms of biological role, exhibits a very high intrinsic GTPase hydrolysis rate. Involved in the addition of a carboxymethylaminomethyl (cmnm) group at the wobble position (U34) of certain tRNAs, forming tRNA-cmnm(5)s(2)U34. This is tRNA modification GTPase MnmE from Synechococcus sp. (strain CC9902).